The chain runs to 466 residues: ATP synthase subunit beta (466 aa).

155-162 contacts ATP; the sequence is GGAGVGKT.

The protein belongs to the ATPase alpha/beta chains family. As to quaternary structure, F-type ATPases have 2 components, CF(1) - the catalytic core - and CF(0) - the membrane proton channel. CF(1) has five subunits: alpha(3), beta(3), gamma(1), delta(1), epsilon(1). CF(0) has three main subunits: a(1), b(2) and c(9-12). The alpha and beta chains form an alternating ring which encloses part of the gamma chain. CF(1) is attached to CF(0) by a central stalk formed by the gamma and epsilon chains, while a peripheral stalk is formed by the delta and b chains.

It localises to the cell inner membrane. It catalyses the reaction ATP + H2O + 4 H(+)(in) = ADP + phosphate + 5 H(+)(out). Its function is as follows. Produces ATP from ADP in the presence of a proton gradient across the membrane. The catalytic sites are hosted primarily by the beta subunits. The chain is ATP synthase subunit beta from Azoarcus sp. (strain BH72).